Consider the following 415-residue polypeptide: Light-independent protochlorophyllide reductase subunit N (415 aa).

Positions 16, 41, and 98 each coordinate [4Fe-4S] cluster.

Belongs to the BchN/ChlN family. In terms of assembly, protochlorophyllide reductase is composed of three subunits; BchL, BchN and BchB. Forms a heterotetramer of two BchB and two BchN subunits. [4Fe-4S] cluster serves as cofactor.

The catalysed reaction is chlorophyllide a + oxidized 2[4Fe-4S]-[ferredoxin] + 2 ADP + 2 phosphate = protochlorophyllide a + reduced 2[4Fe-4S]-[ferredoxin] + 2 ATP + 2 H2O. Its pathway is porphyrin-containing compound metabolism; bacteriochlorophyll biosynthesis (light-independent). Functionally, component of the dark-operative protochlorophyllide reductase (DPOR) that uses Mg-ATP and reduced ferredoxin to reduce ring D of protochlorophyllide (Pchlide) to form chlorophyllide a (Chlide). This reaction is light-independent. The NB-protein (BchN-BchB) is the catalytic component of the complex. The protein is Light-independent protochlorophyllide reductase subunit N of Roseiflexus sp. (strain RS-1).